A 392-amino-acid chain; its full sequence is Putative pectate lyase 21 (392 aa).

An N-terminal signal peptide occupies residues 1 to 21 (MSIVCTFFLFLLNTSFAFAFA). N38 is a glycosylation site (N-linked (GlcNAc...) asparagine). Residues D189, D213, and D217 each contribute to the Ca(2+) site. N220 carries an N-linked (GlcNAc...) asparagine glycan. The active site involves R269.

The protein belongs to the polysaccharide lyase 1 family. Ca(2+) serves as cofactor.

It catalyses the reaction Eliminative cleavage of (1-&gt;4)-alpha-D-galacturonan to give oligosaccharides with 4-deoxy-alpha-D-galact-4-enuronosyl groups at their non-reducing ends.. It participates in glycan metabolism; pectin degradation; 2-dehydro-3-deoxy-D-gluconate from pectin: step 2/5. The protein is Putative pectate lyase 21 of Arabidopsis thaliana (Mouse-ear cress).